We begin with the raw amino-acid sequence, 320 residues long: Malate dehydrogenase (320 aa).

NAD(+)-binding positions include 10 to 15 (GSGMIG) and aspartate 34. Positions 83 and 89 each coordinate substrate. Residues asparagine 96 and 119–121 (ITN) contribute to the NAD(+) site. Substrate contacts are provided by asparagine 121 and arginine 152. Histidine 176 acts as the Proton acceptor in catalysis.

It belongs to the LDH/MDH superfamily. MDH type 3 family.

The enzyme catalyses (S)-malate + NAD(+) = oxaloacetate + NADH + H(+). Catalyzes the reversible oxidation of malate to oxaloacetate. The chain is Malate dehydrogenase from Bartonella quintana (strain Toulouse) (Rochalimaea quintana).